Here is a 454-residue protein sequence, read N- to C-terminus: MTLGQFGGLFCIYLIAVIFILTLTYQEFRRVKFNFNVLFSMLYLLTFYFGFPLTCMLVFQFGVAVVPVEYLLYAMLSATAFYGIYYVTYKTRLRQPRSQPRTPIFTMNRVETNLTWVLLALVAVGTVGIFFMQNGFLLFKLDSYSKIFSSDVSGVALKRFFYFFIPAMLVVYFLKQDRRAWFFFLASTVAFGILTYVIVGGTRANIIIAFSLFLFIGIVRGWITLWMLAAAGVFGIVGMFWLALKRYGLDVNGAEAFYTFLYLTRDTFSPWENLGLLLQNYDKIDFQGLAPIVRDFYVFIPSALWPERPDLVLNTANYFTWDVLDNHSGLAISPTLIGSLVVMGGVLFIPLGAIVVGLIIKWFDWLYEQGKAESNRYKAAILQSFCFGAVFNIIVLAREGLDSFVSRVVFFCVIFGACLVLAKLLYWLFDTAGLIKRQGIKSNRLSTPNAGNQL.

11 helical membrane-spanning segments follow: residues Leu3–Leu23, Phe39–Phe59, Phe61–Phe81, Leu119–Phe139, Gly154–Leu174, Ala180–Gly200, Gly201–Gly221, Trp222–Leu242, Leu340–Ile360, Tyr377–Ala397, and Val409–Phe429.

The protein belongs to the WzyE family. As to quaternary structure, probably part of a complex composed of WzxE, WzyE and WzzE.

It is found in the cell inner membrane. Its pathway is bacterial outer membrane biogenesis; enterobacterial common antigen biosynthesis. In terms of biological role, probably involved in the polymerization of enterobacterial common antigen (ECA) trisaccharide repeat units. This Yersinia pestis bv. Antiqua (strain Angola) protein is Probable ECA polymerase.